The sequence spans 51 residues: MRMKKCPKCGKYTLKDFCSGCNEKSVTIKPPRFSPVDKYGKYRRALKKAKM.

The protein belongs to the NOP10 family.

Its function is as follows. Involved in ribosome biogenesis; more specifically in 18S rRNA pseudouridylation and in cleavage of pre-rRNA. The protein is Ribosome biogenesis protein Nop10 of Methanococcus maripaludis (strain C7 / ATCC BAA-1331).